A 417-amino-acid polypeptide reads, in one-letter code: Low affinity tryptophan permease (417 aa).

11 consecutive transmembrane segments (helical) span residues Ile12 to Pro32, Ile34 to Met54, Leu94 to Tyr114, Ala128 to Ala148, Thr152 to Phe172, Leu190 to His210, Cys231 to Gly251, Leu288 to Phe308, Leu325 to Gly345, Phe346 to Ala366, and Val383 to Cys403.

The protein belongs to the amino acid/polyamine transporter 2 family. Mtr/TnaB/TyrP permease subfamily.

Its subcellular location is the cell inner membrane. Functionally, involved in tryptophan transport across the cytoplasmic membrane. Plays a role in transporting tryptophan which is to be used catabolically. This is Low affinity tryptophan permease (tnaB) from Proteus vulgaris.